A 402-amino-acid chain; its full sequence is Serine/threonine-protein kinase US3 homolog (402 aa).

Disordered regions lie at residues 1–21 (MSST…KVHD) and 46–88 (FPDS…SPET). The 285-residue stretch at 102–386 (YNIVSSLPPG…AQDILMLPLF (285 aa)) folds into the Protein kinase domain. Residues 110-118 (PGSEGYIYV) and lysine 127 contribute to the ATP site. Aspartate 218 serves as the catalytic Proton acceptor.

It belongs to the protein kinase superfamily. Ser/Thr protein kinase family. Post-translationally, phosphorylated by UL13 homolog; this phosphorylation regulates subsequent phosphorylation of UL31 and UL34 homologs by US3. Autophosphorylated.

It is found in the host cytoplasm. Its subcellular location is the host nucleus. The enzyme catalyses L-seryl-[protein] + ATP = O-phospho-L-seryl-[protein] + ADP + H(+). It catalyses the reaction L-threonyl-[protein] + ATP = O-phospho-L-threonyl-[protein] + ADP + H(+). In terms of biological role, multifunctional serine/threonine kinase that plays a role in several processes including egress of virus particles from the nucleus, modulation of the actin cytoskeleton and inhibition of apoptosis. Phosphorylates UL31 and UL34 homologs, two critical regulators of capsid budding from nucleus to endoplasmic reticulum, thereby facilitating virion egress. Modulates and redistributes host components of the nuclear envelope, including LMNA, emerin/EMD and the nuclear matrix protein MATR3. Phosphorylates envelope glycoprotein B (gB), probably to direct it to the cell surface. Promotes virus intracellular spread by restructuring host cell cytoskeleton. Blocks host apoptosis to extend cell survival and allow efficient viral replication. Promotes viral gene expression by phosphorylating host HDAC2 to reduce viral genome silencing. The sequence is that of Serine/threonine-protein kinase US3 homolog (US1206) from Gallid herpesvirus 2 (strain GA) (GaHV-2).